The sequence spans 101 residues: Doublesex- and mab-3-related transcription factor 1 (101 aa).

A DNA-binding region (DM) is located at residues 1–13 (SLIAERQRVMAAQ). The segment covering 52–75 (CLLLESSSPTHSTSTVTTVSTSPS) has biased composition (low complexity). Residues 52-79 (CLLLESSSPTHSTSTVTTVSTSPSEGRM) are disordered.

It belongs to the DMRT family.

It is found in the nucleus. In terms of biological role, may be required for testis development. The protein is Doublesex- and mab-3-related transcription factor 1 (DMRT1) of Alligator mississippiensis (American alligator).